A 174-amino-acid chain; its full sequence is Ribosome maturation factor RimM (174 aa).

One can recognise a PRC barrel domain in the interval 97–169 (PDTYYDHQLE…ILEIDPPDGL (73 aa)).

This sequence belongs to the RimM family. As to quaternary structure, binds ribosomal protein uS19.

The protein resides in the cytoplasm. An accessory protein needed during the final step in the assembly of 30S ribosomal subunit, possibly for assembly of the head region. Essential for efficient processing of 16S rRNA. May be needed both before and after RbfA during the maturation of 16S rRNA. It has affinity for free ribosomal 30S subunits but not for 70S ribosomes. This Mycobacterium ulcerans (strain Agy99) protein is Ribosome maturation factor RimM.